We begin with the raw amino-acid sequence, 82 residues long: Small ribosomal subunit protein bS16 (82 aa).

The protein belongs to the bacterial ribosomal protein bS16 family.

The chain is Small ribosomal subunit protein bS16 from Tolumonas auensis (strain DSM 9187 / NBRC 110442 / TA 4).